The following is a 331-amino-acid chain: DNA-directed RNA polymerase subunit alpha (331 aa).

The tract at residues 1 to 237 (MQSFEKEFLK…DQLSSFIDLK (237 aa)) is alpha N-terminal domain (alpha-NTD). Residues 251 to 331 (FDPSLLNLVD…NWPPKHLSEQ (81 aa)) are alpha C-terminal domain (alpha-CTD).

Belongs to the RNA polymerase alpha chain family. Homodimer. The RNAP catalytic core consists of 2 alpha, 1 beta, 1 beta' and 1 omega subunit. When a sigma factor is associated with the core the holoenzyme is formed, which can initiate transcription.

It catalyses the reaction RNA(n) + a ribonucleoside 5'-triphosphate = RNA(n+1) + diphosphate. Its function is as follows. DNA-dependent RNA polymerase catalyzes the transcription of DNA into RNA using the four ribonucleoside triphosphates as substrates. This is DNA-directed RNA polymerase subunit alpha from Blochmanniella floridana.